The chain runs to 112 residues: Probable 4-amino-4-deoxy-L-arabinose-phosphoundecaprenol flippase subunit ArnE (112 aa).

In terms of domain architecture, EamA spans 35–110 (RHILFWLGMA…IVVGIVILGT (76 aa)). A run of 3 helical transmembrane segments spans residues 37–57 (ILFW…LWLS), 66–86 (IAYP…WGIW), and 89–109 (PVAR…VILG).

Belongs to the ArnE family. As to quaternary structure, heterodimer of ArnE and ArnF.

It is found in the cell inner membrane. The protein operates within bacterial outer membrane biogenesis; lipopolysaccharide biosynthesis. Its function is as follows. Translocates 4-amino-4-deoxy-L-arabinose-phosphoundecaprenol (alpha-L-Ara4N-phosphoundecaprenol) from the cytoplasmic to the periplasmic side of the inner membrane. The chain is Probable 4-amino-4-deoxy-L-arabinose-phosphoundecaprenol flippase subunit ArnE from Klebsiella pneumoniae (strain 342).